Here is a 441-residue protein sequence, read N- to C-terminus: Arginine biosynthesis bifunctional protein ArgJ, mitochondrial (441 aa).

Positions 177, 204, 215, 301, 436, and 441 each coordinate substrate. The active-site Nucleophile is the Thr215.

The protein belongs to the ArgJ family. In terms of assembly, heterodimer of an alpha and a beta chain. In terms of processing, the alpha and beta chains are autoproteolytically processed from a single precursor protein within the mitochondrion.

The protein resides in the mitochondrion matrix. It carries out the reaction N(2)-acetyl-L-ornithine + L-glutamate = N-acetyl-L-glutamate + L-ornithine. The enzyme catalyses L-glutamate + acetyl-CoA = N-acetyl-L-glutamate + CoA + H(+). The protein operates within amino-acid biosynthesis; L-arginine biosynthesis; L-ornithine and N-acetyl-L-glutamate from L-glutamate and N(2)-acetyl-L-ornithine (cyclic): step 1/1. It functions in the pathway amino-acid biosynthesis; L-arginine biosynthesis; N(2)-acetyl-L-ornithine from L-glutamate: step 1/4. Functionally, catalyzes two activities which are involved in the cyclic version of arginine biosynthesis: the synthesis of acetylglutamate from glutamate and acetyl-CoA, and of ornithine by transacetylation between acetylornithine and glutamate. The sequence is that of Arginine biosynthesis bifunctional protein ArgJ, mitochondrial from Candida glabrata (strain ATCC 2001 / BCRC 20586 / JCM 3761 / NBRC 0622 / NRRL Y-65 / CBS 138) (Yeast).